The sequence spans 489 residues: Beta-glucosidase 14 (489 aa).

The signal sequence occupies residues 1–21; it reads MTSKYFSVLVFIILASNEVVA. Residue Gln-49 participates in a beta-D-glucoside binding. The N-linked (GlcNAc...) asparagine glycan is linked to Asn-80. A beta-D-glucoside-binding positions include His-153 and 198–199; that span reads NE. Glu-199 (proton donor) is an active-site residue. A disulfide bridge connects residues Cys-218 and Cys-226. A glycan (N-linked (GlcNAc...) asparagine) is linked at Asn-225. A beta-D-glucoside is bound at residue Tyr-343. Asn-357 carries an N-linked (GlcNAc...) asparagine glycan. Residues Glu-396, Trp-441, 448–449, and Phe-457 contribute to the a beta-D-glucoside site; that span reads EW. Glu-396 acts as the Nucleophile in catalysis.

The protein belongs to the glycosyl hydrolase 1 family.

The catalysed reaction is Hydrolysis of terminal, non-reducing beta-D-glucosyl residues with release of beta-D-glucose.. This Arabidopsis thaliana (Mouse-ear cress) protein is Beta-glucosidase 14.